A 95-amino-acid polypeptide reads, in one-letter code: Co-chaperonin GroES (95 aa).

This sequence belongs to the GroES chaperonin family. In terms of assembly, heptamer of 7 subunits arranged in a ring. Interacts with the chaperonin GroEL.

It localises to the cytoplasm. In terms of biological role, together with the chaperonin GroEL, plays an essential role in assisting protein folding. The GroEL-GroES system forms a nano-cage that allows encapsulation of the non-native substrate proteins and provides a physical environment optimized to promote and accelerate protein folding. GroES binds to the apical surface of the GroEL ring, thereby capping the opening of the GroEL channel. The chain is Co-chaperonin GroES from Neisseria meningitidis serogroup C (strain 053442).